A 276-amino-acid chain; its full sequence is Rhomboid protease GlpG (276 aa).

6 consecutive transmembrane segments (helical) span residues 94–114, 142–162, 169–189, 192–212, 229–249, and 250–270; these read GPVT…MSLI, IFMH…WYLG, LGSG…GYVQ, FSGP…GYVW, LIIF…GMSM, and ANGA…VDTL. Ser201 acts as the Nucleophile in catalysis. His254 is a catalytic residue.

Belongs to the peptidase S54 family.

It localises to the cell inner membrane. It carries out the reaction Cleaves type-1 transmembrane domains using a catalytic dyad composed of serine and histidine that are contributed by different transmembrane domains.. Rhomboid-type serine protease that catalyzes intramembrane proteolysis. This chain is Rhomboid protease GlpG, found in Salmonella choleraesuis (strain SC-B67).